The following is a 549-amino-acid chain: Cation/acetate symporter ActP (549 aa).

13 helical membrane-spanning segments follow: residues 33-53 (WQAI…TYWA), 77-97 (LAIA…ALVF), 103-123 (GLIY…LIAE), 148-168 (ILSA…QMVG), 183-203 (IAVV…GMLA), 206-226 (WVQI…AFMV), 262-282 (ISAL…PHIL), 303-323 (GFMG…IMLV), 355-375 (LFLG…VAGL), 404-424 (VSKI…VLFE), 428-448 (IAFM…PIIL), 464-484 (GGWL…TIWV), and 493-513 (IFPY…GIWF).

Belongs to the sodium:solute symporter (SSF) (TC 2.A.21) family.

Its subcellular location is the cell inner membrane. Transports acetate. In Citrobacter koseri (strain ATCC BAA-895 / CDC 4225-83 / SGSC4696), this protein is Cation/acetate symporter ActP.